A 480-amino-acid polypeptide reads, in one-letter code: tRNA (uracil-5-)-methyltransferase homolog B (480 aa).

Residues Gln-299, Glu-349, and Asn-399 each coordinate S-adenosyl-L-methionine. Residue Cys-427 is the Nucleophile of the active site. Glu-473 serves as the catalytic Proton acceptor.

This sequence belongs to the class I-like SAM-binding methyltransferase superfamily. RNA M5U methyltransferase family.

The protein localises to the mitochondrion. It carries out the reaction uridine(54) in tRNA + S-adenosyl-L-methionine = 5-methyluridine(54) in tRNA + S-adenosyl-L-homocysteine + H(+). The catalysed reaction is a uridine in 12S rRNA + S-adenosyl-L-methionine = a 5-methyluridine in 12S rRNA + S-adenosyl-L-homocysteine + H(+). In terms of biological role, mitochondrial S-adenosyl-L-methionine-dependent methyltransferase that catalyzes the formation of 5-methyl-uridine in tRNAs and 12S rRNA. Catalyzes the methylation of uridine at position 54 (m5U54) in all tRNAs. Specifically methylates the uridine in position 429 of 12S rRNA (m5U429). Does not affect RNA stability or mitochondrial translation. This Danio rerio (Zebrafish) protein is tRNA (uracil-5-)-methyltransferase homolog B (trmt2b).